Here is a 393-residue protein sequence, read N- to C-terminus: Formate-dependent phosphoribosylglycinamide formyltransferase (393 aa).

Residues 22 to 23 and E82 each bind N(1)-(5-phospho-beta-D-ribosyl)glycinamide; that span reads EL. ATP is bound by residues R114, K155, 160 to 165, 195 to 198, and E203; these read SSGKGQ and EGLV. In terms of domain architecture, ATP-grasp spans 119 to 308; the sequence is RLAAETLQLP…EFALHVRAFL (190 aa). Residues E267 and E279 each coordinate Mg(2+). N(1)-(5-phospho-beta-D-ribosyl)glycinamide-binding positions include D286, K355, and 362-363; that span reads RR.

The protein belongs to the PurK/PurT family. Homodimer.

It catalyses the reaction N(1)-(5-phospho-beta-D-ribosyl)glycinamide + formate + ATP = N(2)-formyl-N(1)-(5-phospho-beta-D-ribosyl)glycinamide + ADP + phosphate + H(+). It participates in purine metabolism; IMP biosynthesis via de novo pathway; N(2)-formyl-N(1)-(5-phospho-D-ribosyl)glycinamide from N(1)-(5-phospho-D-ribosyl)glycinamide (formate route): step 1/1. In terms of biological role, involved in the de novo purine biosynthesis. Catalyzes the transfer of formate to 5-phospho-ribosyl-glycinamide (GAR), producing 5-phospho-ribosyl-N-formylglycinamide (FGAR). Formate is provided by PurU via hydrolysis of 10-formyl-tetrahydrofolate. This chain is Formate-dependent phosphoribosylglycinamide formyltransferase, found in Yersinia pseudotuberculosis serotype IB (strain PB1/+).